Here is a 166-residue protein sequence, read N- to C-terminus: Probable tyrosine-protein phosphatase DG1060 (166 aa).

The 154-residue stretch at 9–162 (NFGMVADDLY…LVTYNNAPQW (154 aa)) folds into the Tyrosine-protein phosphatase domain. Residue Cys-101 is the Phosphocysteine intermediate of the active site.

The protein belongs to the protein-tyrosine phosphatase family.

Its subcellular location is the cytoplasm. The enzyme catalyses O-phospho-L-tyrosyl-[protein] + H2O = L-tyrosyl-[protein] + phosphate. The protein is Probable tyrosine-protein phosphatase DG1060 (DG1060) of Dictyostelium discoideum (Social amoeba).